We begin with the raw amino-acid sequence, 395 residues long: Xylose isomerase (395 aa).

Residues histidine 54 and aspartate 57 contribute to the active site. Mg(2+)-binding residues include glutamate 181, glutamate 217, histidine 220, aspartate 245, aspartate 255, aspartate 257, and aspartate 293.

It belongs to the xylose isomerase family. In terms of assembly, homotetramer. Mg(2+) is required as a cofactor.

The protein localises to the cytoplasm. The enzyme catalyses alpha-D-xylose = alpha-D-xylulofuranose. The protein is Xylose isomerase of Arthrobacter sp. (strain FB24).